The primary structure comprises 480 residues: MLRCREVYNICKGAMSNEVKHYDYLVIGGGSGGVASSRRAASYGAKTVLIEGKALGGTCVNVGCVPKKVMWYASDLAHRLLHARDYGLLQEVDISKEKLHFNWKEFAGKRNAYVERLNGIYERNLAKEGVEYVHGWARFNSEGQVEVTRPDQTTEKYTADHILIATGGEPVLPEGIPGAEYGVDSDGFFRLEEQPKKVVISGSGYIATEFAGVFNGLGTETHIVIRKDHVLTKFDPSIQEIVTEHYEKEGVNIHKKESIQRVEKDPNTGKLTVHLSGKIIEDVDQLVWAIGRKSLLGIAPENVGVKLGETGHVVVDEYQNTSTKGIYALGDVVGNMELTPVAIAAGRKLANRLFGPEQMRAQKQDYDNVPSVVFSHPEAGSIGLTEPQAIERYGKENIKIYQTKFTAMYYAMLEDKSPTKYKLICAGPEEKVVGLHIVGDGSAEILQGFGVAIKMGATKADFDSCVAIHPTSAEEIVTLK.

Residues Ser-31 and Gly-32 each contribute to the FAD site. Ser-31 provides a ligand contact to glutathione. Glutathione is bound at residue Arg-38. Residues Glu-51, Thr-58, Cys-59, and Lys-67 each coordinate FAD. Residues Cys-59 and Cys-64 are joined by a disulfide bond. Residue Tyr-121 coordinates glutathione. An FAD-binding site is contributed by Ala-137. The NADP(+) site is built by Ile-206, Glu-209, Arg-226, and Gly-291. FAD is bound at residue Asp-331. Position 337 (Glu-337) interacts with NADP(+). Thr-339 is a binding site for FAD. Residue Arg-347 coordinates glutathione. Residue Val-372 participates in NADP(+) binding. Residue Lys-422 participates in glutathione binding. His-469 provides a ligand contact to FAD. The active-site Proton acceptor is His-469.

It belongs to the class-I pyridine nucleotide-disulfide oxidoreductase family. In terms of assembly, homodimer. Requires FAD as cofactor.

Its subcellular location is the cytoplasm. The protein resides in the mitochondrion. It carries out the reaction 2 glutathione + NADP(+) = glutathione disulfide + NADPH + H(+). Catalyzes the reduction of glutathione disulfide (GSSG) to reduced glutathione (GSH). Constitutes the major mechanism to maintain a high GSH:GSSG ratio in the cytosol. This chain is Glutathione reductase (GLR1), found in Eremothecium gossypii (strain ATCC 10895 / CBS 109.51 / FGSC 9923 / NRRL Y-1056) (Yeast).